Reading from the N-terminus, the 349-residue chain is Isopentenyl-diphosphate delta-isomerase (349 aa).

Substrate is bound at residue 12–13 (RK). FMN is bound by residues Ser69, 70 to 72 (SMT), Ser101, and Asn129. Residue 101–103 (SQR) coordinates substrate. Position 164 (Gln164) interacts with substrate. Glu165 serves as a coordination point for Mg(2+). FMN is bound by residues Lys196, Thr226, 279–281 (GIR), and 300–301 (AA).

The protein belongs to the IPP isomerase type 2 family. In terms of assembly, homooctamer. Dimer of tetramers. FMN is required as a cofactor. The cofactor is NADPH. Mg(2+) serves as cofactor.

It localises to the cytoplasm. It carries out the reaction isopentenyl diphosphate = dimethylallyl diphosphate. Functionally, involved in the biosynthesis of isoprenoids. Catalyzes the 1,3-allylic rearrangement of the homoallylic substrate isopentenyl (IPP) to its allylic isomer, dimethylallyl diphosphate (DMAPP). The sequence is that of Isopentenyl-diphosphate delta-isomerase from Paracoccus zeaxanthinifaciens.